The primary structure comprises 678 residues: DNA ligase (678 aa).

NAD(+)-binding positions include 34-38 (DSEYD), 83-84 (SL), and E114. K116 serves as the catalytic N6-AMP-lysine intermediate. NAD(+)-binding residues include R137, E176, K293, and K317. Residues C411, C414, C429, and C435 each coordinate Zn(2+). Residues 594 to 678 (PTRQPLNGES…LMAGYGQTLS (85 aa)) enclose the BRCT domain.

This sequence belongs to the NAD-dependent DNA ligase family. LigA subfamily. It depends on Mg(2+) as a cofactor. Requires Mn(2+) as cofactor.

The catalysed reaction is NAD(+) + (deoxyribonucleotide)n-3'-hydroxyl + 5'-phospho-(deoxyribonucleotide)m = (deoxyribonucleotide)n+m + AMP + beta-nicotinamide D-nucleotide.. DNA ligase that catalyzes the formation of phosphodiester linkages between 5'-phosphoryl and 3'-hydroxyl groups in double-stranded DNA using NAD as a coenzyme and as the energy source for the reaction. It is essential for DNA replication and repair of damaged DNA. This is DNA ligase from Acinetobacter baumannii (strain AB307-0294).